A 321-amino-acid chain; its full sequence is Cytochrome c biogenesis protein CcsA (321 aa).

The next 8 membrane-spanning stretches (helical) occupy residues 12-32 (HISFSIISIVIIIHLMNLLVY), 45-62 (MIATFSSITGFLVTRWIS), 71-91 (LYESLIFLSWSLSIIHIILYI), 98-117 (LNAITAPSAIFTQGFATSGL), 143-163 (MLLSYAALLCGSLLSVALIVI), 227-247 (VISLGFTFLTIGILSGAVWAN), 260-277 (ETWAFITWTIFAIYLHTR), and 292-312 (VASIGFLLIWICYFGINLLGI).

Belongs to the CcmF/CycK/Ccl1/NrfE/CcsA family. As to quaternary structure, may interact with Ccs1.

It is found in the plastid. The protein localises to the chloroplast thylakoid membrane. Functionally, required during biogenesis of c-type cytochromes (cytochrome c6 and cytochrome f) at the step of heme attachment. This is Cytochrome c biogenesis protein CcsA from Phalaenopsis aphrodite subsp. formosana (Moth orchid).